A 291-amino-acid polypeptide reads, in one-letter code: ATP phosphoribosyltransferase (291 aa).

Belongs to the ATP phosphoribosyltransferase family. Long subfamily. The cofactor is Mg(2+).

The protein localises to the cytoplasm. It carries out the reaction 1-(5-phospho-beta-D-ribosyl)-ATP + diphosphate = 5-phospho-alpha-D-ribose 1-diphosphate + ATP. It participates in amino-acid biosynthesis; L-histidine biosynthesis; L-histidine from 5-phospho-alpha-D-ribose 1-diphosphate: step 1/9. Its activity is regulated as follows. Feedback inhibited by histidine. Catalyzes the condensation of ATP and 5-phosphoribose 1-diphosphate to form N'-(5'-phosphoribosyl)-ATP (PR-ATP). Has a crucial role in the pathway because the rate of histidine biosynthesis seems to be controlled primarily by regulation of HisG enzymatic activity. The protein is ATP phosphoribosyltransferase of Trichlorobacter lovleyi (strain ATCC BAA-1151 / DSM 17278 / SZ) (Geobacter lovleyi).